We begin with the raw amino-acid sequence, 188 residues long: MASYSTNDFKPGLKFIQDGEPCVIVENEFVKPGKGQAFTRTKIRKLISGKVLEINFKSGTSVEAADVVDYNYTYSYKDEDFWYFMHPETFEQISVDEKALGDNDKWLVDQAECIITLWNGSAISVTPPNFVELEVVETDPGLKGDTAGTGGKPATLSTGAVVRVPLFVQIGEVIRVDTRSGEYVSRVK.

N6-(3,6-diaminohexanoyl)-5-hydroxylysine is present on Lys34.

It belongs to the elongation factor P family. May be beta-lysylated on the epsilon-amino group of Lys-34 by the combined action of EpmA and EpmB, and then hydroxylated on the C5 position of the same residue by EpmC (if this protein is present). Lysylation is critical for the stimulatory effect of EF-P on peptide-bond formation. The lysylation moiety may extend toward the peptidyltransferase center and stabilize the terminal 3-CCA end of the tRNA. Hydroxylation of the C5 position on Lys-34 may allow additional potential stabilizing hydrogen-bond interactions with the P-tRNA.

Its subcellular location is the cytoplasm. The protein operates within protein biosynthesis; polypeptide chain elongation. Functionally, involved in peptide bond synthesis. Alleviates ribosome stalling that occurs when 3 or more consecutive Pro residues or the sequence PPG is present in a protein, possibly by augmenting the peptidyl transferase activity of the ribosome. Modification of Lys-34 is required for alleviation. This is Elongation factor P from Actinobacillus pleuropneumoniae serotype 5b (strain L20).